Consider the following 466-residue polypeptide: Vimentin (466 aa).

Low complexity-rich tracts occupy residues M1–R13 and T20–T33. The segment at M1 to T33 is disordered. S2 bears the N-acetylserine mark. The interval S2–E95 is head. Position 5 is a phosphoserine (S5). S7 is subject to Phosphoserine; by PKA and PKC; alternate. O-linked (GlcNAc) serine; alternate glycosylation occurs at S7. The residue at position 8 (S8) is a Phosphoserine. S9 and S10 each carry phosphoserine; by PKC. Residue T20 is modified to Phosphothreonine. Phosphoserine is present on residues S25 and S26. T33 carries an O-linked (GlcNAc) threonine glycan. S34 carries O-linked (GlcNAc) serine; alternate glycosylation. A Phosphoserine; by PKC; alternate modification is found at S34. The residue at position 39 (S39) is a Phosphoserine; by CaMK2, PKA, PKC and ROCK2. At S42 the chain carries Phosphoserine; by PKC. Phosphoserine; by PKA is present on S47. Phosphoserine is present on residues S49 and S51. Residue Y53 is modified to Phosphotyrosine. S55 and S56 each carry phosphoserine. Y61 is subject to Phosphotyrosine. Phosphoserine; by PKA and PKC is present on S66. Position 72 is a phosphoserine; by AURKB and ROCK2 (S72). S73, S83, and S87 each carry phosphoserine. Residues F96–L131 form a coil 1A region. Positions F96 to L131 form a coiled coil. The region spanning E103–I411 is the IF rod domain. Residue K104 forms a Glycyl lysine isopeptide (Lys-Gly) (interchain with G-Cter in SUMO2) linkage. Y117 bears the Phosphotyrosine mark. Residues K120, K129, and K139 each carry the N6-acetyllysine; alternate modification. N6-succinyllysine; alternate is present on residues K120 and K129. Glycyl lysine isopeptide (Lys-Gly) (interchain with G-Cter in SUMO2); alternate cross-links involve residues K120, K129, and K139. Residues L132–E153 form a linker 1 region. S144 carries the post-translational modification Phosphoserine. The stretch at M154–L245 forms a coiled coil. Residues M154–L245 form a coil 1B region. N6-acetyllysine is present on K168. N6-acetyllysine; alternate is present on K188. K188 is subject to N6-succinyllysine; alternate. S214 carries the phosphoserine modification. An N6-acetyllysine; alternate modification is found at K223. K223 is covalently cross-linked (Glycyl lysine isopeptide (Lys-Gly) (interchain with G-Cter in SUMO2); alternate). S226 bears the Phosphoserine mark. The residue at position 235 (K235) is an N6-acetyllysine. Residues Q246–A268 form a linker 12 region. A Glycyl lysine isopeptide (Lys-Gly) (interchain with G-Cter in SUMO2) cross-link involves residue K262. A coil 2 region spans residues L269–E407. K294 carries the post-translational modification N6-acetyllysine; alternate. N6-succinyllysine; alternate is present on K294. K294 participates in a covalent cross-link: Glycyl lysine isopeptide (Lys-Gly) (interchain with G-Cter in SUMO2); alternate. S299 is modified (phosphoserine). The stretch at N303–E407 forms a coiled coil. A Glycyl lysine isopeptide (Lys-Gly) (interchain with G-Cter in SUMO2) cross-link involves residue K313. Phosphoserine is present on S325. The [IL]-x-C-x-x-[DE] motif motif lies at L326–E329. At K373 the chain carries N6-acetyllysine; alternate. Residue K373 forms a Glycyl lysine isopeptide (Lys-Gly) (interchain with G-Cter in SUMO2); alternate linkage. Residues E408–E466 form a tail region. A phosphoserine mark is found at S409, S412, S419, and S420. A Phosphothreonine modification is found at T426. S430 carries the phosphoserine modification. T436 is subject to Phosphothreonine. S438 carries the post-translational modification Phosphoserine. Residue K439 forms a Glycyl lysine isopeptide (Lys-Gly) (interchain with G-Cter in SUMO2) linkage. The residue at position 445 (K445) is an N6-acetyllysine; alternate. K445 is modified (N6-succinyllysine; alternate). K445 is covalently cross-linked (Glycyl lysine isopeptide (Lys-Gly) (interchain with G-Cter in SUMO2); alternate). Residue K445 forms a Glycyl lysine isopeptide (Lys-Gly) (interchain with G-Cter in SUMO1); alternate linkage. Phosphothreonine occurs at positions 446 and 458. S459 is subject to Phosphoserine.

This sequence belongs to the intermediate filament family. As to quaternary structure, homomer assembled from elementary dimers. Identified in complexes that contain VIM, EZR, AHNAK, BFSP1, BFSP2, ANK2, PLEC, PRX and spectrin. Interacts with BCAS3. Interacts with LGSN. Interacts with SYNM. Interacts (via rod region) with PLEC (via CH 1 domain). Interacts with STK33. Interacts with LARP6. Interacts with RAB8B. Interacts with TOR1A; the interaction associates TOR1A with the cytoskeleton. Interacts with TOR1AIP1. Interacts with TOR1AIP1. Interacts with DIAPH1. Interacts with EPPK1; interaction is dependent of higher-order structure of intermediate filament. Interacts with the non-receptor tyrosine kinase SRMS; the interaction leads to phosphorylation of VIM. Interacts with NOD2. Interacts (via head region) with CORO1C. Interacts with HDGF. Interacts with PRKCE (via phorbol-ester/DAG-type 2 domain). Interacts with BFSP2. Interacts with PPL. Interacts with PKP1 and PKP2. Interacts with SCRIB (via PDZ domains); the interaction protects SCRIB from proteasomal degradation and facilitates SCRIB localization to intermediate filaments, the interaction is reduced by cell contact inhibition. One of the most prominent phosphoproteins in various cells of mesenchymal origin. Phosphorylation is enhanced during cell division, at which time vimentin filaments are significantly reorganized. Phosphorylation by PKN1 inhibits the formation of filaments. Filament disassembly during mitosis is promoted by phosphorylation at Ser-55 as well as by nestin. Phosphorylated at Ser-56 by CDK5 during neutrophil secretion in the cytoplasm. Phosphorylated by STK33. Phosphorylated on tyrosine residues by SRMS. Post-translationally, S-nitrosylation is induced by interferon-gamma and oxidatively-modified low-densitity lipoprotein (LDL(ox)) possibly implicating the iNOS-S100A8/9 transnitrosylase complex.

It localises to the cytoplasm. The protein resides in the cytoskeleton. Its subcellular location is the nucleus matrix. The protein localises to the cell membrane. Vimentins are class-III intermediate filaments found in various non-epithelial cells, especially mesenchymal cells. Vimentin is attached to the nucleus, endoplasmic reticulum, and mitochondria, either laterally or terminally. Plays a role in cell directional movement, orientation, cell sheet organization and Golgi complex polarization at the cell migration front. Protects SCRIB from proteasomal degradation and facilitates its localization to intermediate filaments in a cell contact-mediated manner. Functionally, involved with LARP6 in the stabilization of type I collagen mRNAs for CO1A1 and CO1A2. The sequence is that of Vimentin from Rattus norvegicus (Rat).